Consider the following 245-residue polypeptide: MAPK-interacting and spindle-stabilizing protein-like (245 aa).

The interval M1–H245 is disordered. S2 carries the N-acetylserine modification. Residues S2, S6, and S15 each carry the phosphoserine modification. Polar residues predominate over residues A17–K26. Over residues W34–S51 the composition is skewed to low complexity. Composition is skewed to pro residues over residues S74–P127, P164–P190, and A198–A207.

This sequence belongs to the MISS family.

In Homo sapiens (Human), this protein is MAPK-interacting and spindle-stabilizing protein-like (MAPK1IP1L).